The sequence spans 308 residues: Glutaminase (308 aa).

Residues Ser66, Asn117, Glu161, Asn168, Tyr192, Tyr244, and Val262 each contribute to the substrate site.

It belongs to the glutaminase family. Homotetramer.

The catalysed reaction is L-glutamine + H2O = L-glutamate + NH4(+). This chain is Glutaminase, found in Proteus mirabilis (strain HI4320).